A 109-amino-acid polypeptide reads, in one-letter code: Transcription initiation factor IIA subunit 2 (109 aa).

Belongs to the TFIIA subunit 2 family. TFIIA is a heterodimer composed of the large toa1 and the small toa2 subunits.

Its subcellular location is the nucleus. It localises to the cytoplasm. Functionally, TFIIA is a component of the transcription machinery of RNA polymerase II and plays an important role in transcriptional activation. TFIIA in a complex with tbp mediates transcriptional activity. This is Transcription initiation factor IIA subunit 2 (toa2) from Schizosaccharomyces pombe (strain 972 / ATCC 24843) (Fission yeast).